Here is a 146-residue protein sequence, read N- to C-terminus: Hemoglobin subunit beta-1 (146 aa).

The Globin domain maps to Val-2 to His-146. His-63 and His-92 together coordinate heme b.

This sequence belongs to the globin family. Hb1 is a heterotetramer of two alpha chains and two beta-1 chains. Red blood cells.

In terms of biological role, involved in oxygen transport from gills to the various peripheral tissues. In Pseudaphritis urvillii (Congolli), this protein is Hemoglobin subunit beta-1 (hbb1).